The primary structure comprises 292 residues: Hypoxia responsive morphology factor A (292 aa).

The short motif at arginine 48 to isoleucine 70 is the Bipartite nuclear localization signal element. Residues glycine 156 to proline 186 form an RNA recognition motif (RRM)-like domain region.

The protein belongs to the hrmA family.

The protein resides in the nucleus. In terms of biological role, hypoxia responsive morphology factor that modulates the expression of the subtelomeric hrmA-associated cluster (HAC) containing genes that alter the hyphal surface (such as reduced total chitin or increased beta-glucan exposure) and perturb inter-hyphal interactions within the developing biofilms, resulting in a loss of vertically aligned polarized growing filaments. Consequently, this hypoxia-typic morphotype (called H-MORPH) with altered biofilm architecture leads to increased hypoxia fitness, increased host inflammation, rapid disease progression, and mortality in a murine model of invasive aspergillosis. This Aspergillus fumigatus (strain CBS 144.89 / FGSC A1163 / CEA10) (Neosartorya fumigata) protein is Hypoxia responsive morphology factor A.